The primary structure comprises 205 residues: Dephospho-CoA kinase (205 aa).

One can recognise a DPCK domain in the interval 4 to 204 (VVGLTGGIAS…QYYLTLATQQ (201 aa)). 12 to 17 (ASGKTT) is a binding site for ATP.

This sequence belongs to the CoaE family.

The protein resides in the cytoplasm. The enzyme catalyses 3'-dephospho-CoA + ATP = ADP + CoA + H(+). The protein operates within cofactor biosynthesis; coenzyme A biosynthesis; CoA from (R)-pantothenate: step 5/5. In terms of biological role, catalyzes the phosphorylation of the 3'-hydroxyl group of dephosphocoenzyme A to form coenzyme A. The chain is Dephospho-CoA kinase from Haemophilus ducreyi (strain 35000HP / ATCC 700724).